The primary structure comprises 341 residues: S-adenosylmethionine:tRNA ribosyltransferase-isomerase (341 aa).

This sequence belongs to the QueA family. Monomer.

Its subcellular location is the cytoplasm. The catalysed reaction is 7-aminomethyl-7-carbaguanosine(34) in tRNA + S-adenosyl-L-methionine = epoxyqueuosine(34) in tRNA + adenine + L-methionine + 2 H(+). It functions in the pathway tRNA modification; tRNA-queuosine biosynthesis. Transfers and isomerizes the ribose moiety from AdoMet to the 7-aminomethyl group of 7-deazaguanine (preQ1-tRNA) to give epoxyqueuosine (oQ-tRNA). The polypeptide is S-adenosylmethionine:tRNA ribosyltransferase-isomerase (Clostridium kluyveri (strain NBRC 12016)).